Reading from the N-terminus, the 254-residue chain is 5-oxoprolinase subunit A (254 aa).

The protein belongs to the LamB/PxpA family. Forms a complex composed of PxpA, PxpB and PxpC.

The catalysed reaction is 5-oxo-L-proline + ATP + 2 H2O = L-glutamate + ADP + phosphate + H(+). Functionally, catalyzes the cleavage of 5-oxoproline to form L-glutamate coupled to the hydrolysis of ATP to ADP and inorganic phosphate. In Acinetobacter baumannii (strain ACICU), this protein is 5-oxoprolinase subunit A.